The following is a 773-amino-acid chain: Tyrosine kinase receptor Cad96Ca (773 aa).

Residues 1–48 (MVYHHHNHESRIIHCRKQLTSWRRRSLLLTIIVVTATVVSLISQEAEA) form the signal peptide. Topologically, residues 49-315 (HNQNAPPILY…ITIFSLKSGT (267 aa)) are extracellular. Residues 58–172 (YVRERNWRIS…ENSSGYRPQT (115 aa)) enclose the Cadherin domain. N-linked (GlcNAc...) asparagine glycosylation is found at N126, N164, and N180. Positions 196–302 (SIRNGLPNSR…TPSGGHHNNS (107 aa)) are disordered. A compositionally biased stretch (pro residues) spans 209–235 (WYPPVPQNNIFGPPPFGNNYPPPPPNI). Residues 243–253 (SGEEEQPDEEV) are compositionally biased toward acidic residues. Polar residues-rich tracts occupy residues 254–283 (TPTT…STRV) and 290–302 (ETTT…HNNS). Residues N278, N279, N300, and N301 are each glycosylated (N-linked (GlcNAc...) asparagine). A helical transmembrane segment spans residues 316–336 (IPIVVTVGGFFVAIAVLLAYL). Residues 337–773 (CRRRLCAISR…NIVSLSGEKL (437 aa)) lie on the Cytoplasmic side of the membrane. 2 disordered regions span residues 352-373 (KEKE…LTDD) and 411-447 (TGVT…AGSS). Positions 361 to 373 (SNQSQLSSTLTDD) are enriched in polar residues. A compositionally biased stretch (low complexity) spans 411-433 (TGVTNGGVSSPGVPSPGTGEPGS). Positions 470–749 (LKFFNILGEG…MLDKLLHTEM (280 aa)) constitute a Protein kinase domain. Residues 476-484 (LGEGAFGQV) and K504 each bind ATP. The active-site Proton acceptor is the D610.

This sequence belongs to the protein kinase superfamily. Tyr protein kinase family. Fibroblast growth factor receptor subfamily.

It localises to the membrane. It carries out the reaction L-tyrosyl-[protein] + ATP = O-phospho-L-tyrosyl-[protein] + ADP + H(+). The sequence is that of Tyrosine kinase receptor Cad96Ca (Cad96Ca) from Drosophila melanogaster (Fruit fly).